The chain runs to 113 residues: Small ribosomal subunit protein bS6 (113 aa).

The protein belongs to the bacterial ribosomal protein bS6 family.

Functionally, binds together with bS18 to 16S ribosomal RNA. The polypeptide is Small ribosomal subunit protein bS6 (Flavobacterium psychrophilum (strain ATCC 49511 / DSM 21280 / CIP 103535 / JIP02/86)).